Consider the following 386-residue polypeptide: uncharacterized protein (386 aa).

Residues 355-386 (PSEAQKVQVKSNKKPPIAPKPEHLKKRDHGLC) are disordered. A compositionally biased stretch (basic residues) spans 377–386 (HLKKRDHGLC).

This is an uncharacterized protein from Rickettsia prowazekii (strain Madrid E).